The following is a 306-amino-acid chain: Tyrosine recombinase XerC (306 aa).

Residues 1-85 (MQQQLEQFLA…AIKSFFEYLQ (85 aa)) enclose the Core-binding (CB) domain. The Tyr recombinase domain occupies 106–289 (FLPKAITVAQ…SNDRAVKYDQ (184 aa)). Active-site residues include arginine 147, lysine 171, histidine 241, arginine 244, and histidine 267. The active-site O-(3'-phospho-DNA)-tyrosine intermediate is tyrosine 276.

This sequence belongs to the 'phage' integrase family. XerC subfamily. In terms of assembly, forms a cyclic heterotetrameric complex composed of two molecules of XerC and two molecules of XerD.

The protein resides in the cytoplasm. Its function is as follows. Site-specific tyrosine recombinase, which acts by catalyzing the cutting and rejoining of the recombining DNA molecules. The XerC-XerD complex is essential to convert dimers of the bacterial chromosome into monomers to permit their segregation at cell division. It also contributes to the segregational stability of plasmids. The protein is Tyrosine recombinase XerC of Herpetosiphon aurantiacus (strain ATCC 23779 / DSM 785 / 114-95).